The primary structure comprises 322 residues: Glycerol-3-phosphate dehydrogenase [NAD(P)+] (322 aa).

NADPH contacts are provided by Trp-13, His-33, and Lys-99. Residues Lys-99, Gly-127, and Ser-129 each contribute to the sn-glycerol 3-phosphate site. Ala-131 is a binding site for NADPH. 5 residues coordinate sn-glycerol 3-phosphate: Lys-182, Asp-235, Ser-245, Arg-246, and Asn-247. Lys-182 functions as the Proton acceptor in the catalytic mechanism. Arg-246 contributes to the NADPH binding site. Glu-272 contributes to the NADPH binding site.

The protein belongs to the NAD-dependent glycerol-3-phosphate dehydrogenase family.

It is found in the cytoplasm. The catalysed reaction is sn-glycerol 3-phosphate + NAD(+) = dihydroxyacetone phosphate + NADH + H(+). It catalyses the reaction sn-glycerol 3-phosphate + NADP(+) = dihydroxyacetone phosphate + NADPH + H(+). It participates in membrane lipid metabolism; glycerophospholipid metabolism. Functionally, catalyzes the reduction of the glycolytic intermediate dihydroxyacetone phosphate (DHAP) to sn-glycerol 3-phosphate (G3P), the key precursor for phospholipid synthesis. The polypeptide is Glycerol-3-phosphate dehydrogenase [NAD(P)+] (Ruthia magnifica subsp. Calyptogena magnifica).